The chain runs to 89 residues: Small ribosomal subunit protein uS15 (89 aa).

The protein belongs to the universal ribosomal protein uS15 family. As to quaternary structure, part of the 30S ribosomal subunit. Forms a bridge to the 50S subunit in the 70S ribosome, contacting the 23S rRNA.

Functionally, one of the primary rRNA binding proteins, it binds directly to 16S rRNA where it helps nucleate assembly of the platform of the 30S subunit by binding and bridging several RNA helices of the 16S rRNA. Its function is as follows. Forms an intersubunit bridge (bridge B4) with the 23S rRNA of the 50S subunit in the ribosome. This chain is Small ribosomal subunit protein uS15, found in Synechococcus elongatus (strain ATCC 33912 / PCC 7942 / FACHB-805) (Anacystis nidulans R2).